Here is a 100-residue protein sequence, read N- to C-terminus: Small ribosomal subunit protein uS14c (100 aa).

It belongs to the universal ribosomal protein uS14 family. As to quaternary structure, part of the 30S ribosomal subunit.

Its subcellular location is the plastid. It localises to the chloroplast. Functionally, binds 16S rRNA, required for the assembly of 30S particles. In Coffea arabica (Arabian coffee), this protein is Small ribosomal subunit protein uS14c.